We begin with the raw amino-acid sequence, 150 residues long: Large ribosomal subunit protein uL15 (150 aa).

The disordered stretch occupies residues 1-55 (MADNEILQMHDLKPAPGAKKDRTRVGRGEGSKGKTSGRGAKGQTKRNHVRPGFEG). The segment covering 8 to 32 (QMHDLKPAPGAKKDRTRVGRGEGSK) has biased composition (basic and acidic residues).

This sequence belongs to the universal ribosomal protein uL15 family. As to quaternary structure, part of the 50S ribosomal subunit.

Its function is as follows. Binds to the 23S rRNA. The protein is Large ribosomal subunit protein uL15 of Bifidobacterium longum (strain NCC 2705).